A 463-amino-acid chain; its full sequence is MGTEPQLKLYNTLTREKVDFQPIDRENVRLYVCGPTVYDFAHIGNARPAIVFDVLFRLLRQVYGENHVTYARNITDVDDKINARALRDHPGLPLNEAIRLVTEKTETQYYQDTTALGCLEPTVQPRATDNIAQMIEIIEKLIARGHAYQAAGEVLFDTKSMADYGQLSKRNLDEQQAGARIAVDAHKKSPGDFVLWKLSAENEPGWESPWGRGRPGWHIECSAMSGRYLGDVFDIHGGGLDLIFPHHENEIAQSRCAHGTDVMANVWMHNGFLQVEGRKMSKSEGNFVTIYELLQTEKLGGRTWPGAVLRLAMLMTHYREPIDFSVKRLEEAERLLAKWPAADIGNAKPDATVLVALADDLNTVVAIQALHALAQAANADASILPVFAASAALLGLLPEKVEMDDAVASEIDARVRARLELLKAKNFAEADKIRDTLLAEGIQLKDGKDPATGERITTWEVKR.

C33 serves as a coordination point for Zn(2+). Residues 35-45 (PTVYDFAHIGN) carry the 'HIGH' region motif. The Zn(2+) site is built by C221, H246, and E250. Residues 279 to 283 (KMSKS) carry the 'KMSKS' region motif. K282 contributes to the ATP binding site.

This sequence belongs to the class-I aminoacyl-tRNA synthetase family. In terms of assembly, monomer. Zn(2+) serves as cofactor.

The protein resides in the cytoplasm. The enzyme catalyses tRNA(Cys) + L-cysteine + ATP = L-cysteinyl-tRNA(Cys) + AMP + diphosphate. This chain is Cysteine--tRNA ligase, found in Rhizobium rhizogenes (strain K84 / ATCC BAA-868) (Agrobacterium radiobacter).